The chain runs to 268 residues: UPF0328 protein ECU10_1850 (268 aa).

It belongs to the UPF0328 family.

The protein is UPF0328 protein ECU10_1850 of Encephalitozoon cuniculi (strain GB-M1) (Microsporidian parasite).